The sequence spans 163 residues: Protein-export protein SecB (163 aa).

Belongs to the SecB family. As to quaternary structure, homotetramer, a dimer of dimers. One homotetramer interacts with 1 SecA dimer.

It is found in the cytoplasm. Its function is as follows. One of the proteins required for the normal export of preproteins out of the cell cytoplasm. It is a molecular chaperone that binds to a subset of precursor proteins, maintaining them in a translocation-competent state. It also specifically binds to its receptor SecA. The protein is Protein-export protein SecB of Pseudomonas aeruginosa (strain LESB58).